Here is a 462-residue protein sequence, read N- to C-terminus: ATP synthase subunit beta (462 aa).

Position 152-159 (152-159 (GGAGVGKT)) interacts with ATP.

This sequence belongs to the ATPase alpha/beta chains family. In terms of assembly, F-type ATPases have 2 components, CF(1) - the catalytic core - and CF(0) - the membrane proton channel. CF(1) has five subunits: alpha(3), beta(3), gamma(1), delta(1), epsilon(1). CF(0) has three main subunits: a(1), b(2) and c(9-12). The alpha and beta chains form an alternating ring which encloses part of the gamma chain. CF(1) is attached to CF(0) by a central stalk formed by the gamma and epsilon chains, while a peripheral stalk is formed by the delta and b chains.

It localises to the cell inner membrane. It catalyses the reaction ATP + H2O + 4 H(+)(in) = ADP + phosphate + 5 H(+)(out). In terms of biological role, produces ATP from ADP in the presence of a proton gradient across the membrane. The catalytic sites are hosted primarily by the beta subunits. This Shewanella amazonensis (strain ATCC BAA-1098 / SB2B) protein is ATP synthase subunit beta.